The following is a 3919-amino-acid chain: MLRDLITWVLNTYLGKYLENLNSAQLSVALLSGEVELENIPIRKDALRSFNLPVEVTAGSIRKIKLQIPVRQFRTSPWCISIEGLFCIICPKNLDNWDYEKEKLQDLEYKLAVLDTAEAGWRSEKGKQMESYYFSSYNNWLKYGTNMATNIIDNIELKISDVHFRFEDIVDTGKSKICTGIKIGSLTAQSCDCDWTNGSYKMNNNEMNYKLVELKELSVYWDLLHEDIKCQSYSNQEILEKMHSTCELRSHNFIIKPICATARWKRDKCQQVIRTKDKPRVSCELLVPEVVIDISKVQRLQMLDKLSEIRQVKEVRQYRLKRPTCTVESNPIAWWKYATICHGFDFKKNEEKWLMLKENLRYMLLYKSIILNPNENLSAADKEFKAYIESDRKISDLTIMRRICFEKVFTKGFAFESQNEQGKNMLFHWFPNWMGWYANSPSTPNNEQDESLKHLEDDILVALENSLQNSSDLKSDAVFGHFSIKLLKGLVILQTEDKLNDGRNKSMEMQFNNFSAYLQLSPQLTSYTVGISLQEVYLIDKTSSDTMHNYLIKPQTGNTATPNQLVKNAALQEDILFQLQYENCNHLRFQLNIKSKGLDLIYNEDAIQWLLDFLADSNSFKYSPRNRVAKKTDFMKNWNEMFSGNEVNRKIWMFEIEIFAPRIIFLENYKVSNSLMVLLDFGKLEMRKMEVKRVIPVIESAVTENTSDDDETYLTPCSTPPASEKSGSESPTLLENPKTESFLNKNVQLEYVLHNKIYDKYLINFTNLQVLVCKYEERWQACLKTSSNFHLIDKFNINLTLEQRNIFTVDPEYPSFMLFGTCPTILIHGNEELINNCCNIMKPIIKASKEMENIYRGGNTIYASERIKNLAEDDRSRVVIEFVMDQLVIEMQSTERSIAELQIIGARAGLTKEPHETNISMSVHGLLLVDAIQSFGPDFELLVASHRHVGMDSLSGSLKHSAIVSPTSPGSPNFFDRATSPHMITKAVQNIKMGDRSTEFCDDEDSTALISVDIKIVPPNESNSMQLHTTSITFNSLDIIANQDTIIEILNFAKRTLLAQNIFPSESPESPKEATEAPVDVVDQVDHKSHNEIFFDFFRLNILLLYTIKRDKFNVGRKVGTVTLTEAKINASFQSDLSIIGSLGGIQVIDITSEAFCHPRILSVGRDQILRASDTNKQTVLSQLSNEIYSNNYNEETKSDESDAISFQSHWSDKTTCTFQMRMASASYTHCPRFLRDVNACITYFKRSLREFATSIGNKATDMAKEFVQQVRAVEQIGPVYPQRNRQDNWLDIIISSPIIILPISNTSTNVLIANLGKISCSNAVKCDSDEFNESYTIEIKNTYVYSLNIDEGEYSFNVHPAKNKDAIPILHDTAITLQLYAGYSDDNDEDKQLNRFSIKGSMVEALKVSLNRKQYELLLESIRYATNFSNEVLNESDELDQNGDIEPTANIDAESIISTTIQFSVPVFQINLQNEYHNDLINLTFKNFNVKHISKGFDKDVEVVLKSVLMEDLKSDLTSPFRNMVTSVDLEQKIKKNEMTSSSCPDLPSYCNSLKNRSSSVPSCFYNHMQVKVFGGDQKYTSSNKNELGKKKESQTLVIYKSHTGRSAQNGKLEQTSSIQFNCLNLAICVERWYTIFDFFGLVSVDNVNEKYPEEMKLVEKHIDKVCSKLKVSIRSFNFTLIRNESLLSRVNVSNAVFMILQDPYSKIVEGCLGSVSVNDLTKYGNIYKQKFLTSGTEALNFVYKKKLVDLEALNTLDTDSTLRINMSAVHYIHTKRFSTELHVFVKDLLQLQTPVIRKLKKHGSEQNMRPSKMKLVIQADSPVIVLPSSYNRNEVIIAYLGQFSLKNSFHFASDNNIISKMSATPSKDEILDVMRIDLVNINLFSGERSSMKAKADQEKDRIIIADMNFLRLGQPFFNESCFLHLQLERNLSADAHRVCPDISVQGTFSKLSGIINIQQYKLIRSFLNNNIGEQTDDIYMNYHNNSCTSIERLSTINLMPKNEVSKIVSILISIRILLEDVSLLLALNTSQSAAIEPLACIHFLKSTLEIDLFSDGSQDIDLISSNILIVDERNESDKSNENVFKNILEPSKKEVRIENSVQVEVHCRKKATFSKYTIMLNNMRVFALLSFLDQLKSYLQEDSPAPVVNNAANQIAQKPQIDTSISTEYVVNITDSEIIFAEECSRLDSNAIILKSTTVICYKPNSNIVPLSLDINHLEIFSCTLDAEEESALSIIDPFTLIIELRSNCLNILIQKHLNIRLSYVDVKLFSRMARLLPTQTSRPKNVISKADSDLEKAAPLVAMGFEISDCLYAMQINNWRINDAAIWLSQQKQNTYRNPALEMKTAVVDASLISVFIIDDCMDADVPLLEVSLSKFLLNFTFQTQDPNPKETNIRHYSLGNIDTEVSVNYYNRRLSGWEPVAETWESNLNWKYTKGHLDNKKRFEIGISSKQMLKLNVTSTFIELFHMVLKNWTNDFNDNGAKNFRQRSPFIPFALQNLSGTPLLFKPIYAPLGDLTRSDLQQVELIKNWYSVQPNETKTFDFSQKSKLRHVHSHQLNLHQIFVQIHGWTLIGPISVDKVGMFFRTTKLDSQFLTKSRIVFDISLIGSAQKLIKVKSSLGVINKLDRNVFLKMTLKGTHSDGLSSISVIKPNDELSVPLKFIDASLYVAHNTSESDAYEDTGFSNEEILWKACGKDDTRQLLAGYDTNKSILYTFVNISREIYHCKEQNLPGHKITLLPPLKINNMLCCDLMFKIHEHATGRINSSESVNIYNVNICQPLNLSITLDNFQLSGQLKIPVSHRGVIEPKLKLIDIQKRELHVRVSIQSVPGKGMELYISAPVWIINKTGLPLIYKQEGTSHTAAGQFEEHETARQVAPLMFSFSDQEGSPALVLRLGKAYGSNNMWCKSFSTHKDLADRDLRAENTKGSYAIGISVRRGRGLYACTTFVTLSPRFHLHNRSGYKLEFMQLCDIVNYDRPDPRKIISAPVDCNFAFHWPNWDQEQIICVRIPEIECCCWSKGIPIKDVQSLYINVRNEWGEMFFLRLEIISKDATFILLFTDARTLPPPIRIDNCSEVVINFSQLRSKPVWITPVRPQSSLSYVMDDPLGQQILLMEAPGGNMIEFPINNKNNIKKTLTYTNFIYIAFQGTFERSNEEENTHRQLVLGVRGKKVVIVEKNSGDRSQLWLMNSNGQLEHEGSTPPIQTNDANAVRLVLDLEKAPNPMEFTNLVVRTPNKQRVTTQTWRFENGRLMCHANMCVQSRFGESGLKPNYEAVVGRTENRASSSKQIPIGQHIVAQKLRPGSGQLELSTKMDGPISTIEICDIKIKQNSVFLTPDLLWMHASLNNRQITDKGKVSFVHEYLINVELVKGIGISIIARKPCEEIMFISLDHINCDIVQSALENSLDLNIAYIQIDNQLLDAVSPIALHTQTSNDLEETQNAVVLKLKMLPSPNKNAIIFKYLTLDLKPSTASLEEKLILKVASFLGYGKINRQNLSVQYQFENTDDKPFLQDMKRYYFENLSIGATQVRLSAFTSSKLPVELHETKKALGLTLIKFEDALIELDRYSDKLHFETMDVYRKELKKHYINQVKWHAAAILGSVDFLGNPLGFANDLSEGVSGLIFEGSVKSLVKNVTHGISNSTAKLTETLSDSLGKVVLDDHDNETRQRILELQSNTSGGHLAAGLKGLGFGLLGGVTSIVRHTYDGATSDGVPGFLSGLGKGLVGTVTKPIIGVLDLASETASAVRETSRDSHRNAPERKRLPRCVTGAPGGLLPLYSNRQSKGQQYLYLINQKNFSEKIISYEPNLWSDKEARLRLLVSTEYVRIFSLSDANPTIMFECHVSEILSCHPVVTNAGTTPTTSSRASASHYIEISTNLPKITRPRIRCRSEECAEAASRCINYAKSVFDEREHAVL.

The Chorein N-terminal domain occupies 4-114 (DLITWVLNTY…QDLEYKLAVL (111 aa)). Residues 706 to 736 (TSDDDETYLTPCSTPPASEKSGSESPTLLEN) are disordered. The region spanning 2292–2334 (KADSDLEKAAPLVAMGFEISDCLYAMQINNWRINDAAIWLSQQ) is the UBA domain. In terms of domain architecture, SHR-BD spans 2837-3113 (ELYISAPVWI…YVMDDPLGQQ (277 aa)). A disordered region spans residues 3749–3768 (VRETSRDSHRNAPERKRLPR). Over residues 3751–3764 (ETSRDSHRNAPERK) the composition is skewed to basic and acidic residues.

Belongs to the VPS13 family. As to expression, expressed in intestinal cells (at protein level).

It is found in the cytoplasm. The protein resides in the lysosome. Mediates the transfer of lipids between membranes at organelle contact sites. Functions in promoting mitochondrial clearance by mitochondrial autophagy (mitophagy), also possibly by positively regulating mitochondrial fission. Mitophagy plays an important role in regulating cell health and mitochondrial size and homeostasis. This is Intermembrane lipid transfer protein Vps13D from Drosophila melanogaster (Fruit fly).